A 304-amino-acid polypeptide reads, in one-letter code: Capsid protein (304 aa).

Basic and acidic residues-rich tracts occupy residues 1 to 24 (MGDS…REAR) and 32 to 54 (FEGK…EMSL). The disordered stretch occupies residues 1–54 (MGDSTKKAETAKDVGTSQEKREARPLPTAADFEGKDTSEDTDGRAADADGEMSL).

This sequence belongs to the potexviruses coat protein family.

The protein localises to the virion. Required for genome encapsidation. Forms ribonucleoprotein complexes along with TGB1 helicase and viral RNA. The chain is Capsid protein from Potato virus M (strain German) (PVM).